The chain runs to 515 residues: MKDSSNLLEMRNISKEFPGVKALDNVTLKVKKGSVHALMGENGAGKSTLMKCLFGIYHPNSGEIFISGQKVQFKNSKHALDNGVSMVHQELNQVRERNVMDNLWLGRYPKKGLFIDEKKMYDETEKIFKDLDINVNPRDKVSTLSVSQMQMVEIAKAVSYNSKIIVMDEPTSSLTEKEVSHLFKIINKLRKQGISIIYISHKMEEILEISDEVTIMRDGKWIATEKASDLTMDLIIKLMVGRELTDRFPKKDHIPKETILEVNNLSDAKNELKNVSFKLRKGEILGIAGLVGAKRTETLETLFGLREKGSGDIILHGKKVDNSKPFKAMQNGFALVTEERRQTGIFGKLPIDFNSIIANIDSYKTSTGLLANGRISKDTQWVIDSMKVKTPSQKTLIGSLSGGNQQKIVIGKWLLRKPEILLLDEPTRGIDVGAKFEIYQLINELAKEDKGIIMVSSEMPELLGVCDRILVMSNGRVSGIVNANETTQEEIMHLSAKYLSVTGGVNNANQIKEKV.

2 ABC transporter domains span residues 8–243 and 254–499; these read LEMR…VGRE and IPKE…AKYL. Residue 40-47 coordinates ATP; sequence GENGAGKS.

This sequence belongs to the ABC transporter superfamily. Galactose/methyl galactoside importer (TC 3.A.1.2.3) family. The complex is composed of one ATP-binding protein (MglA), two transmembrane proteins (MglC) and a solute-binding protein (MglB).

It is found in the cell membrane. It carries out the reaction D-galactose(out) + ATP + H2O = D-galactose(in) + ADP + phosphate + H(+). The enzyme catalyses methyl beta-D-galactoside(out) + ATP + H2O = methyl beta-D-galactoside(in) + ADP + phosphate + H(+). Its function is as follows. Part of the ABC transporter complex MglABC involved in galactose/methyl galactoside import. Responsible for energy coupling to the transport system. The polypeptide is Galactose/methyl galactoside import ATP-binding protein MglA (Clostridium perfringens (strain ATCC 13124 / DSM 756 / JCM 1290 / NCIMB 6125 / NCTC 8237 / Type A)).